We begin with the raw amino-acid sequence, 347 residues long: NADH-ubiquinone oxidoreductase chain 2 (347 aa).

Helical transmembrane passes span 3-23 (PLIL…VMMS), 25-45 (HWLM…PLLM), 59-79 (YFLT…INLL), 96-116 (IIMT…FWVP), 148-170 (GINL…WGGL), 178-198 (ILAY…AFNP), 200-220 (MTLL…MLFM), 247-267 (IMLS…WMII), 276-296 (ITLA…YMRL), and 326-346 (LPML…ITLL).

Belongs to the complex I subunit 2 family. In terms of assembly, core subunit of respiratory chain NADH dehydrogenase (Complex I) which is composed of 45 different subunits. Interacts with TMEM242.

The protein localises to the mitochondrion inner membrane. It catalyses the reaction a ubiquinone + NADH + 5 H(+)(in) = a ubiquinol + NAD(+) + 4 H(+)(out). Functionally, core subunit of the mitochondrial membrane respiratory chain NADH dehydrogenase (Complex I) which catalyzes electron transfer from NADH through the respiratory chain, using ubiquinone as an electron acceptor. Essential for the catalytic activity and assembly of complex I. This Saccopteryx leptura (Lesser sac-winged bat) protein is NADH-ubiquinone oxidoreductase chain 2.